The following is a 191-amino-acid chain: Potassium-transporting ATPase KdpC subunit (191 aa).

A helical transmembrane segment spans residues 10–30; the sequence is ITLVFCVFFSVFYILVLWLFA.

The protein belongs to the KdpC family. In terms of assembly, the system is composed of three essential subunits: KdpA, KdpB and KdpC.

It is found in the cell inner membrane. In terms of biological role, part of the high-affinity ATP-driven potassium transport (or Kdp) system, which catalyzes the hydrolysis of ATP coupled with the electrogenic transport of potassium into the cytoplasm. This subunit acts as a catalytic chaperone that increases the ATP-binding affinity of the ATP-hydrolyzing subunit KdpB by the formation of a transient KdpB/KdpC/ATP ternary complex. The sequence is that of Potassium-transporting ATPase KdpC subunit from Bacteroides fragilis (strain YCH46).